The primary structure comprises 452 residues: Putative tripartite motif-containing protein 49B (452 aa).

The RING-type zinc-finger motif lies at 15 to 56 (CPICMNYFIDPVTIDCGHSFCRPCFYLNWKDSPFLVQCSECT). A B box-type zinc finger spans residues 88–129 (SEEQMCGTHRETKKMFCEVDRSLLCLLCSSSQEHRDHRHCPI). Residues C93, H96, C115, and H121 each contribute to the Zn(2+) site. The B30.2/SPRY domain occupies 269–452 (ELSAGPITGL…LRPIFCCIHF (184 aa)).

Belongs to the TRIM/RBCC family.

This is Putative tripartite motif-containing protein 49B (TRIM49B) from Homo sapiens (Human).